Reading from the N-terminus, the 449-residue chain is Plasmepsin IV (449 aa).

At 1–37 (MALTVKEEEFSNTLIKNASAFDRLKLGNLKNLKIQKK) the chain is on the cytoplasmic side. The propeptide occupies 1-121 (MALTVKEEEF…SGYAQKGYLG (121 aa)). The helical; Signal-anchor for type II membrane protein transmembrane segment at 38–58 (LQFLYLILFVLITGVFFFFLI) threads the bilayer. The Lumenal segment spans residues 59 to 449 (GNFYSHRKLY…SVGFAVAKNL (391 aa)). A Peptidase A1 domain is found at 137–444 (FYGEGQIGTN…DYEKESVGFA (308 aa)). The active site involves Asp155. Cys168 and Cys173 are joined by a disulfide. Asp335 is a catalytic residue. The cysteines at positions 370 and 406 are disulfide-linked.

This sequence belongs to the peptidase A1 family. Component of the hemozoin formation complex (HFC) composed of falcipains FP2A and/or FP2B, plasmepsins PMII, PMIII/HAP and PMIV, heme detoxifying protein HDP and falcilysin FLN. The HFC complex is involved in hemoglobin degradation and detoxification of heme in the food vacuole during the asexual blood stage. Proteolytically cleaved into the soluble active mature form by cysteine proteases in the digestive vacuole of trophozoites. Proteolysis requires an acidic environment. Autoprocessing or transprocessing by other plasmepsins such as PMII may serve as an alternate activation system.

The protein localises to the membrane. Its subcellular location is the vacuole lumen. It carries out the reaction Hydrolysis of the bonds linking certain hydrophobic residues in hemoglobin or globin. Also cleaves small molecules substrates such as Ala-Leu-Glu-Arg-Thr-Phe-|-Phe(NO2)-Ser-Phe-Pro-Thr.. With respect to regulation, inhibited by pepstatin A. During the asexual blood stage, catalyzes the cleavage of denatured host hemoglobin (Hb) or globins. Digestion of host Hb is an essential step which provides the parasite with amino acids for protein synthesis, and regulates osmolarity. This is Plasmepsin IV from Plasmodium falciparum (isolate HB3).